The primary structure comprises 85 residues: UPF0335 protein BH15140 (85 aa).

Belongs to the UPF0335 family.

This chain is UPF0335 protein BH15140, found in Bartonella henselae (strain ATCC 49882 / DSM 28221 / CCUG 30454 / Houston 1) (Rochalimaea henselae).